The sequence spans 311 residues: S-adenosyl-L-methionine-dependent tRNA 4-demethylwyosine synthase (311 aa).

[4Fe-4S] cluster-binding residues include Cys-26, Cys-39, Cys-52, Cys-62, Cys-66, and Cys-69. One can recognise a Radical SAM core domain in the interval 45–283 (YGIETHRCIQ…LKLAKMLDEN (239 aa)).

It belongs to the TYW1 family. As to quaternary structure, monomer. The cofactor is [4Fe-4S] cluster.

It is found in the cytoplasm. The enzyme catalyses N(1)-methylguanosine(37) in tRNA(Phe) + pyruvate + S-adenosyl-L-methionine = 4-demethylwyosine(37) in tRNA(Phe) + 5'-deoxyadenosine + L-methionine + CO2 + H2O. Its function is as follows. Component of the wyosine derivatives biosynthesis pathway that catalyzes the condensation of N-methylguanine with 2 carbon atoms from pyruvate to form the tricyclic 4-demethylwyosine (imG-14) on guanosine-37 of tRNA(Phe). The chain is S-adenosyl-L-methionine-dependent tRNA 4-demethylwyosine synthase from Methanocaldococcus jannaschii (strain ATCC 43067 / DSM 2661 / JAL-1 / JCM 10045 / NBRC 100440) (Methanococcus jannaschii).